A 540-amino-acid chain; its full sequence is Glucose-6-phosphate isomerase (540 aa).

The Proton donor role is filled by E350. Residues H381 and K503 contribute to the active site.

This sequence belongs to the GPI family.

It is found in the cytoplasm. The enzyme catalyses alpha-D-glucose 6-phosphate = beta-D-fructose 6-phosphate. It functions in the pathway carbohydrate biosynthesis; gluconeogenesis. Its pathway is carbohydrate degradation; glycolysis; D-glyceraldehyde 3-phosphate and glycerone phosphate from D-glucose: step 2/4. Catalyzes the reversible isomerization of glucose-6-phosphate to fructose-6-phosphate. The chain is Glucose-6-phosphate isomerase from Burkholderia pseudomallei (strain 668).